The sequence spans 338 residues: Ketol-acid reductoisomerase (NADP(+)) (338 aa).

The 181-residue stretch at methionine 1–threonine 181 folds into the KARI N-terminal Rossmann domain. NADP(+) is bound by residues tyrosine 24–glutamine 27, arginine 47, and serine 52. The active site involves histidine 107. An NADP(+)-binding site is contributed by glycine 133. Positions asparagine 182–isoleucine 327 constitute a KARI C-terminal knotted domain. Residues aspartate 190, glutamate 194, glutamate 226, and glutamate 230 each coordinate Mg(2+). Serine 251 provides a ligand contact to substrate.

This sequence belongs to the ketol-acid reductoisomerase family. The cofactor is Mg(2+).

The enzyme catalyses (2R)-2,3-dihydroxy-3-methylbutanoate + NADP(+) = (2S)-2-acetolactate + NADPH + H(+). The catalysed reaction is (2R,3R)-2,3-dihydroxy-3-methylpentanoate + NADP(+) = (S)-2-ethyl-2-hydroxy-3-oxobutanoate + NADPH + H(+). Its pathway is amino-acid biosynthesis; L-isoleucine biosynthesis; L-isoleucine from 2-oxobutanoate: step 2/4. It participates in amino-acid biosynthesis; L-valine biosynthesis; L-valine from pyruvate: step 2/4. Functionally, involved in the biosynthesis of branched-chain amino acids (BCAA). Catalyzes an alkyl-migration followed by a ketol-acid reduction of (S)-2-acetolactate (S2AL) to yield (R)-2,3-dihydroxy-isovalerate. In the isomerase reaction, S2AL is rearranged via a Mg-dependent methyl migration to produce 3-hydroxy-3-methyl-2-ketobutyrate (HMKB). In the reductase reaction, this 2-ketoacid undergoes a metal-dependent reduction by NADPH to yield (R)-2,3-dihydroxy-isovalerate. This Delftia acidovorans (strain DSM 14801 / SPH-1) protein is Ketol-acid reductoisomerase (NADP(+)).